The primary structure comprises 321 residues: Arginine-hydroxylase NDUFAF5, mitochondrial (321 aa).

The transit peptide at 1-25 (MNVSVKSLRGVSRTWRSFSSRQGMN) directs the protein to the mitochondrion.

It belongs to the methyltransferase superfamily. In terms of assembly, interacts with NDUFS7.

It is found in the mitochondrion inner membrane. Functionally, arginine hydroxylase that mediates hydroxylation of 'Arg-111' of NDUFS7 and is involved in the assembly of mitochondrial NADH:ubiquinone oxidoreductase complex (complex I, MT-ND1) at early stages. May also have methyltransferase activity. The chain is Arginine-hydroxylase NDUFAF5, mitochondrial from Danio rerio (Zebrafish).